The primary structure comprises 722 residues: Nucleolar protein 10 (722 aa).

WD repeat units lie at residues 50 to 90 (EMPT…LKFE), 174 to 213 (TDAA…RVAA), 228 to 266 (EGLP…PLLV), 270 to 308 (YYGL…VFSS), and 310 to 349 (EPQA…PAPR). Coiled-coil stretches lie at residues 423-476 (EYRK…ANVA) and 511-534 (SNVA…EEQE). 4 disordered regions span residues 521-555 (LLEE…GWVQ), 572-607 (SYIQ…PRFY), 616-635 (RSFS…LEER), and 664-722 (TEKQ…RRPF). Positions 523–534 (EEEQEQAEEEQE) are enriched in acidic residues. Residues 572-586 (SYIQRQERRQQDRNT) are compositionally biased toward basic and acidic residues. Positions 587–600 (RLQSSDTHTQQSHG) are enriched in polar residues. The stretch at 620–681 (DVSRKQKTHK…QAERDHHEER (62 aa)) forms a coiled coil. Basic and acidic residues predominate over residues 664-682 (TEKQRFQQQAERDHHEERR). 2 stretches are compositionally biased toward basic residues: residues 683–693 (RIRRSAGHLHS) and 702–722 (GGGR…RRPF).

This sequence belongs to the WD repeat NOL10/ENP2 family.

The protein resides in the nucleus. It localises to the nucleolus. The sequence is that of Nucleolar protein 10 (nol10) from Danio rerio (Zebrafish).